A 252-amino-acid chain; its full sequence is Protein BTG3 (252 aa).

The tract at residues 138–163 (VTSDYHSGSSSSDEDTSKEVDVKPSS) is disordered.

It belongs to the BTG family. As to expression, ubiquitous.

Functionally, overexpression impairs serum-induced cell cycle progression from the G0/G1 to S phase. This is Protein BTG3 (Btg3) from Mus musculus (Mouse).